Consider the following 284-residue polypeptide: Homeobox protein six1 (284 aa).

Positions 124 to 183 (GEETSYCFKEKSRGVLREWYAHNPYPSPREKRELAEATGLTTTQVSNWFKNRRQRDRAAE) form a DNA-binding region, homeobox. A disordered region spans residues 168-230 (VSNWFKNRRQ…SPPQSPDQNS (63 aa)). Residues 179–190 (DRAAEAKERENT) are compositionally biased toward basic and acidic residues. A compositionally biased stretch (low complexity) spans 191–202 (ENNNTSTNKQNQ).

Belongs to the SIX/Sine oculis homeobox family.

It is found in the nucleus. The protein resides in the cytoplasm. Transcription factor that is involved in the regulation of cell proliferation, apoptosis and embryonic development. Depending on context, functions as a transcriptional repressor or activator. Required for the normal formation of pre-placodal ectoderm. This Xenopus laevis (African clawed frog) protein is Homeobox protein six1 (six1).